Reading from the N-terminus, the 217-residue chain is Guanylate kinase (217 aa).

A Guanylate kinase-like domain is found at 15–194 (GLMLVLSSPS…AYQRLKRILL (180 aa)). 22–29 (SPSGAGKT) serves as a coordination point for ATP.

Belongs to the guanylate kinase family.

The protein localises to the cytoplasm. It catalyses the reaction GMP + ATP = GDP + ADP. Essential for recycling GMP and indirectly, cGMP. The chain is Guanylate kinase from Hyphomonas neptunium (strain ATCC 15444).